Reading from the N-terminus, the 59-residue chain is Large ribosomal subunit protein bL32 (59 aa).

Over residues 1 to 16 the composition is skewed to basic residues; that stretch reads MAVPKRKVSPHRRGNR. Positions 1-20 are disordered; the sequence is MAVPKRKVSPHRRGNRRAHD.

It belongs to the bacterial ribosomal protein bL32 family.

The chain is Large ribosomal subunit protein bL32 from Erythrobacter litoralis (strain HTCC2594).